Consider the following 224-residue polypeptide: 7-cyano-7-deazaguanine synthase (224 aa).

Leu-12–Thr-22 provides a ligand contact to ATP. Residues Cys-193, Cys-201, Cys-204, and Cys-207 each contribute to the Zn(2+) site.

Belongs to the QueC family. The cofactor is Zn(2+).

It carries out the reaction 7-carboxy-7-deazaguanine + NH4(+) + ATP = 7-cyano-7-deazaguanine + ADP + phosphate + H2O + H(+). It functions in the pathway purine metabolism; 7-cyano-7-deazaguanine biosynthesis. In terms of biological role, catalyzes the ATP-dependent conversion of 7-carboxy-7-deazaguanine (CDG) to 7-cyano-7-deazaguanine (preQ(0)). The polypeptide is 7-cyano-7-deazaguanine synthase (Prochlorococcus marinus (strain MIT 9215)).